A 231-amino-acid polypeptide reads, in one-letter code: UPF0758 protein RBAM_025090 (231 aa).

In terms of domain architecture, MPN spans 109 to 231; sequence VIRSPEDGAK…FVSLKEKGYL (123 aa). His-180, His-182, and Asp-193 together coordinate Zn(2+). Positions 180–193 match the JAMM motif motif; sequence HNHPSGDPTPSRED.

The protein belongs to the UPF0758 family.

This is UPF0758 protein RBAM_025090 from Bacillus velezensis (strain DSM 23117 / BGSC 10A6 / LMG 26770 / FZB42) (Bacillus amyloliquefaciens subsp. plantarum).